The following is a 924-amino-acid chain: Lon protease homolog 3, mitochondrial (924 aa).

The transit peptide at 1 to 63 (MMPKRFNTSG…PVQSLLLFRA (63 aa)) directs the protein to the mitochondrion. In terms of domain architecture, Lon N-terminal spans 112–325 (VIALPLPHKP…LTLELVKKQV (214 aa)). 447–454 (GPPGVGKT) provides a ligand contact to ATP. The region spanning 738–922 (QTPVGVVMGL…EKIFDLAFNY (185 aa)) is the Lon proteolytic domain. Residues serine 828 and lysine 871 contribute to the active site.

Belongs to the peptidase S16 family. As to quaternary structure, homohexamer or homoheptamer. Organized in a ring with a central cavity.

It is found in the mitochondrion matrix. It catalyses the reaction Hydrolysis of proteins in presence of ATP.. ATP-dependent serine protease that mediates the selective degradation of misfolded, unassembled or oxidatively damaged polypeptides as well as certain short-lived regulatory proteins in the mitochondrial matrix. May also have a chaperone function in the assembly of inner membrane protein complexes. Participates in the regulation of mitochondrial gene expression and in the maintenance of the integrity of the mitochondrial genome. Binds to mitochondrial DNA in a site-specific manner. This Arabidopsis thaliana (Mouse-ear cress) protein is Lon protease homolog 3, mitochondrial (LON3).